The chain runs to 149 residues: Calmodulin-2 (149 aa).

Residue A2 is modified to N-acetylalanine. EF-hand domains are found at residues 8-43, 44-79, 81-116, and 117-149; these read EQIA…LGQN, PTEG…KMKD, DSEE…PGEK, and LTDE…MTSK. D21, D23, N25, N27, E32, D57, D59, N61, T63, E68, D94, D96, N98, and E105 together coordinate Ca(2+). Position 116 is an N6,N6,N6-trimethyllysine (K116). 5 residues coordinate Ca(2+): D130, D132, D134, Q136, and E141.

It belongs to the calmodulin family.

Functionally, calmodulin mediates the control of a large number of enzymes, ion channels and other proteins by Ca(2+). Among the enzymes to be stimulated by the calmodulin-Ca(2+) complex are a number of protein kinases and phosphatases. This Branchiostoma floridae (Florida lancelet) protein is Calmodulin-2 (CAM2).